The chain runs to 1065 residues: Alpha-L-arabinofuranosidase (1065 aa).

An N-terminal signal peptide occupies residues 1-26; sequence MKHWKKMAASLIAISTMVAVVPTTYA. Residues 277–346 enclose the BIG2 domain; it reads VVNNKLTLIE…TTELGGVKAE (70 aa). The disordered stretch occupies residues 997–1031; the sequence is KAPTNPGEGDGDKGDGNKPTTPTTGDKTNVNKPGS. Over residues 1014 to 1031 the composition is skewed to polar residues; that stretch reads KPTTPTTGDKTNVNKPGS. The chain crosses the membrane as a helical span at residues 1040-1060; it reads VLGLGGAVVALAIAGISLTLW.

Belongs to the glycosyl hydrolase 43 family.

It localises to the cell membrane. The enzyme catalyses Hydrolysis of terminal non-reducing alpha-L-arabinofuranoside residues in alpha-L-arabinosides.. Involved in the type II arabinogalactan (AG) side chains degradation. Releases arabinofuranose (Araf) from alpha-1,3-Araf-substituted beta-1,6-galactooligosaccharides. Can use radish root AGP, larch AG and arabinan. Shows weaker activity with gum arabic and arabinoxylan. In Bifidobacterium longum subsp. longum (strain ATCC 15707 / DSM 20219 / JCM 1217 / NCTC 11818 / E194b), this protein is Alpha-L-arabinofuranosidase.